Here is a 485-residue protein sequence, read N- to C-terminus: Mitochondrial metalloendopeptidase OMA1 (485 aa).

Residues 1–16 (MKPSLKRRLLLLSRKF) constitute a mitochondrion transit peptide. Residues 17–147 (AKASIRKLLR…GPGRWFQNPR (131 aa)) lie on the Mitochondrial matrix side of the membrane. A helical transmembrane segment spans residues 148 to 168 (TVFTVVLVGSVGLITLIVGNT). The Mitochondrial intermembrane segment spans residues 169–485 (ETIPYTKRTH…AGRTGVEGFL (317 aa)). His-352 contacts Zn(2+). The active site involves Glu-353. 2 residues coordinate Zn(2+): His-356 and Glu-405. Residues 456-485 (KLLAQANVMEEALMIYREVQAGRTGVEGFL) form a required for protease activation region.

Belongs to the peptidase M48A family. In terms of assembly, homooligomer. Zn(2+) is required as a cofactor.

It is found in the mitochondrion inner membrane. Its function is as follows. Protease that is part of the quality control system in the inner membrane of mitochondria. Metalloendopeptidase that modulates the oxidative phosphorylation (OXPHOS) system and plant growth. Involved in tolerance mechanisms to heat, osmotic and oxidative stresses. In Arabidopsis thaliana (Mouse-ear cress), this protein is Mitochondrial metalloendopeptidase OMA1.